The primary structure comprises 541 residues: Calcium-dependent protein kinase 26 (541 aa).

Gly residues predominate over residues Met-1–Ala-11. A disordered region spans residues Met-1–Arg-74. A lipid anchor (N-myristoyl glycine) is attached at Gly-2. Over residues Ala-38–Pro-67 the composition is skewed to low complexity. Positions Tyr-83–Ile-341 constitute a Protein kinase domain. Residues Leu-89 to Thr-97 and Lys-112 contribute to the ATP site. The Proton acceptor role is filled by Asp-207. The tract at residues Ala-347–Ile-377 is autoinhibitory domain. EF-hand domains follow at residues Glu-384–Lys-419, Phe-420–Met-455, Asp-456–Tyr-491, and Ala-493–Cys-526. The Ca(2+) site is built by Asp-397, Asp-399, Ser-401, Thr-403, Glu-408, Asp-433, Asp-435, Asn-437, Glu-444, Asp-469, Asp-471, Ser-473, Tyr-475, Glu-480, Asp-504, Asn-506, Asp-508, Arg-510, and Glu-515.

The protein belongs to the protein kinase superfamily. Ser/Thr protein kinase family. CDPK subfamily. Specifically expressed in heading panicles, spikelets and mature pollen grains. Not expressed in vegetative tissues.

It localises to the membrane. The catalysed reaction is L-seryl-[protein] + ATP = O-phospho-L-seryl-[protein] + ADP + H(+). The enzyme catalyses L-threonyl-[protein] + ATP = O-phospho-L-threonyl-[protein] + ADP + H(+). Its activity is regulated as follows. Activated by calcium. Autophosphorylation may play an important role in the regulation of the kinase activity. In terms of biological role, may play a role in signal transduction pathways that involve calcium as a second messenger. The sequence is that of Calcium-dependent protein kinase 26 from Oryza sativa subsp. japonica (Rice).